The chain runs to 92 residues: YcgL domain-containing protein Sama_1929 (92 aa).

Residues 1-85 (MICAVYKSSR…PKDNLLTQHR (85 aa)) enclose the YcgL domain.

This is YcgL domain-containing protein Sama_1929 from Shewanella amazonensis (strain ATCC BAA-1098 / SB2B).